A 269-amino-acid polypeptide reads, in one-letter code: UPF0739 protein C1orf74 (269 aa).

The protein belongs to the UPF0739 family.

The polypeptide is UPF0739 protein C1orf74 (C1orf74) (Homo sapiens (Human)).